Reading from the N-terminus, the 290-residue chain is Agroclavine dehydrogenase (290 aa).

Belongs to the fgaFS/easG family. As to quaternary structure, monomer.

The catalysed reaction is agroclavine + NADP(+) = didehydroagroclavine + NADPH + H(+). It participates in alkaloid biosynthesis; ergot alkaloid biosynthesis. Functionally, agroclavine dehydrogenase; part of the gene cluster that mediates the biosynthesis of fungal ergot alkaloid. DmaW catalyzes the first step of ergot alkaloid biosynthesis by condensing dimethylallyl diphosphate (DMAP) and tryptophan to form 4-dimethylallyl-L-tryptophan. The second step is catalyzed by the methyltransferase easF that methylates 4-dimethylallyl-L-tryptophan in the presence of S-adenosyl-L-methionine, resulting in the formation of 4-dimethylallyl-L-abrine. The catalase easC and the FAD-dependent oxidoreductase easE then transform 4-dimethylallyl-L-abrine to chanoclavine-I which is further oxidized by easD in the presence of NAD(+), resulting in the formation of chanoclavine-I aldehyde. Agroclavine dehydrogenase easG then mediates the conversion of chanoclavine-I aldehyde to agroclavine via a non-enzymatic adduct reaction: the substrate is an iminium intermediate that is formed spontaneously from chanoclavine-I aldehyde in the presence of glutathione. The presence of easA is not required to complete this reaction. Further conversion of agroclavine to paspalic acid is a two-step process involving oxidation of agroclavine to elymoclavine and of elymoclavine to paspalic acid, the second step being performed by the elymoclavine oxidase cloA. Paspalic acid is then further converted to D-lysergic acid. Ergopeptines are assembled from D-lysergic acid and three different amino acids by the D-lysergyl-peptide-synthetases composed each of a monomudular and a trimodular nonribosomal peptide synthetase subunit. LpsB and lpsC encode the monomodular subunits responsible for D-lysergic acid activation and incorporation into the ergopeptine backbone. LpsA1 and A2 subunits encode the trimodular nonribosomal peptide synthetase assembling the tripeptide portion of ergopeptines. LpsA1 is responsible for formation of the major ergopeptine, ergotamine, and lpsA2 for alpha-ergocryptine, the minor ergopeptine of the total alkaloid mixture elaborated by C.purpurea. D-lysergyl-tripeptides are assembled by the nonribosomal peptide synthetases and released as N-(D-lysergyl-aminoacyl)-lactams. Cyclolization of the D-lysergyl-tripeptides is performed by the Fe(2+)/2-ketoglutarate-dependent dioxygenase easH which introduces a hydroxyl group into N-(D-lysergyl-aminoacyl)-lactam at alpha-C of the aminoacyl residue followed by spontaneous condensation with the terminal lactam carbonyl group. This Claviceps purpurea (Ergot fungus) protein is Agroclavine dehydrogenase.